The primary structure comprises 126 residues: Large ribosomal subunit protein bL17 (126 aa).

The protein belongs to the bacterial ribosomal protein bL17 family. Part of the 50S ribosomal subunit. Contacts protein L32.

This is Large ribosomal subunit protein bL17 from Aliivibrio salmonicida (strain LFI1238) (Vibrio salmonicida (strain LFI1238)).